The chain runs to 390 residues: Aspartate beta-hydroxylase domain-containing protein 1 (390 aa).

A disordered region spans residues 1-54 (MKEGRGSFSVERGPRKERETAQSGMWKGNSPAGSQGAAMEGTGGELGGQGNWGP). Topologically, residues 1-72 (MKEGRGSFSV…RASLIMLPWP (72 aa)) are cytoplasmic. The segment covering 41-51 (GTGGELGGQGN) has biased composition (gly residues). The helical transmembrane segment at 73 to 95 (LPLASSALTLLFGALTSLFLWYC) threads the bilayer. The Lumenal segment spans residues 96–390 (YRLGSQDMQA…ALDFVFAPDP (295 aa)). A disordered region spans residues 116–143 (RGGPVGCSEAGGPSPGGPGDPGEGPRTE). Over residues 128–137 (PSPGGPGDPG) the composition is skewed to gly residues. Serine 129 is modified (phosphoserine).

Belongs to the aspartyl/asparaginyl beta-hydroxylase family.

Its subcellular location is the membrane. This Homo sapiens (Human) protein is Aspartate beta-hydroxylase domain-containing protein 1 (ASPHD1).